The primary structure comprises 181 residues: Peptide deformylase 2 (181 aa).

Cysteine 109 and histidine 151 together coordinate Fe cation. Glutamate 152 is a catalytic residue. Histidine 155 is a binding site for Fe cation.

It belongs to the polypeptide deformylase family. It depends on Fe(2+) as a cofactor.

The catalysed reaction is N-terminal N-formyl-L-methionyl-[peptide] + H2O = N-terminal L-methionyl-[peptide] + formate. Functionally, removes the formyl group from the N-terminal Met of newly synthesized proteins. Requires at least a dipeptide for an efficient rate of reaction. N-terminal L-methionine is a prerequisite for activity but the enzyme has broad specificity at other positions. This is Peptide deformylase 2 from Shewanella oneidensis (strain ATCC 700550 / JCM 31522 / CIP 106686 / LMG 19005 / NCIMB 14063 / MR-1).